A 346-amino-acid chain; its full sequence is High mobility group protein 20A (346 aa).

2 stretches are compositionally biased toward polar residues: residues 1-10 (MESLMASSTL) and 55-65 (SQGQLLQSEAS). Disordered stretches follow at residues 1-112 (MESL…YVRF) and 178-210 (FSRK…TEVK). Residues 71-81 (NEQRPEDEQRS) are compositionally biased toward basic and acidic residues. Residues 82 to 95 (KRGGWSKGRKRKKP) show a composition bias toward basic residues. The segment at residues 102–170 (PKSPLTGYVR…RYMKELEQYQ (69 aa)) is a DNA-binding region (HMG box). Ser104 bears the Phosphoserine mark. The segment covering 181-210 (KTQDRQKGKSHRQDAARQATHDHEKETEVK) has biased composition (basic and acidic residues). A coiled-coil region spans residues 228 to 272 (SKAREAELRQLRKSNMEFEERNAALQKHVESMRTAVEKLEVDVIQ).

Interacts with DTNB. As to expression, expressed in brain. Detected in mature neurons.

Its subcellular location is the nucleus. Functionally, plays a role in neuronal differentiation as chromatin-associated protein. Acts as inhibitor of HMG20B. Overcomes the repressive effects of the neuronal silencer REST and induces the activation of neuronal-specific genes. Involved in the recruitment of the histone methyltransferase KMT2A/MLL1 and consequent increased methylation of histone H3 lysine 4. This is High mobility group protein 20A (Hmg20a) from Mus musculus (Mouse).